The sequence spans 411 residues: Receptor GIN3 (411 aa).

Residues 1–99 (MSGFVAGEEA…LLPILPHPRN (99 aa)) lie on the Extracellular side of the membrane. Residues 100 to 120 (IPIIVPLFCVFTVMTSLAVGL) form a helical membrane-spanning segment. Residues 121-134 (RLWSRQKVAGGIRS) are Cytoplasmic-facing. Residues 135–155 (FDWLALAGFGLTIIYGAVSVY) traverse the membrane as a helical segment. Residues 156–181 (HSKVSGPYQAFYDRTWDQMKENYKVY) are Extracellular-facing. A helical transmembrane segment spans residues 182-202 (LVLTIMYPFIMGLIKISLLLF). Residues 203-227 (YYRVATLNYVQWAVYATGSLTIANS) are Cytoplasmic-facing. The helical transmembrane segment at 228-248 (IAAIITHCLAFMPIDFWNHFL) threads the bilayer. Over 249-262 (QSPFKFNSRTPMLV) the chain is Extracellular. The chain crosses the membrane as a helical span at residues 263 to 283 (FGAVYILTDVAILIIPMPMVF). Over 284-292 (QLKLYPREK) the chain is Cytoplasmic. A helical membrane pass occupies residues 293 to 313 (VIAVIAFSLGGVACVASGFRI). Over 314 to 328 (WAIDEFQNYSGKNSS) the chain is Extracellular. N321 and N326 each carry an N-linked (GlcNAc...) asparagine glycan. Residues 329–349 (GLMIDAWTMIELNLTLICASA) traverse the membrane as a helical segment. Residues 350–411 (PAIRALAIHY…QSPVIPKEVV (62 aa)) lie on the Cytoplasmic side of the membrane. A disordered region spans residues 371-411 (FSSSGATRGSKSAGSSGKSKTPESEKSMQVSQSPVIPKEVV). The segment covering 372 to 389 (SSSGATRGSKSAGSSGKS) has biased composition (low complexity).

Belongs to the SAT4 family. Interacts with guanine nucleotide-binding protein alpha GPA2; to activate adenylate cyclase and positively regulate nematode trap formation.

Its subcellular location is the cell membrane. Its function is as follows. Receptor that senses nematode-derived signals at the cell surface and signals via adenylate cyclase to positively regulate trap formation for nematode capture. This chain is Receptor GIN3, found in Arthrobotrys oligospora (strain ATCC 24927 / CBS 115.81 / DSM 1491) (Nematode-trapping fungus).